Reading from the N-terminus, the 182-residue chain is Putative manganese efflux pump MntP (182 aa).

6 helical membrane passes run 6-26 (LIPL…VSLG), 37-57 (ILYI…IGMV), 71-91 (HFAG…SSIL), 101-121 (IGIS…SVGL), 131-151 (VITI…GLFI), and 162-182 (YGEI…LFPI).

It belongs to the MntP (TC 9.B.29) family.

Its subcellular location is the cell membrane. Its function is as follows. Probably functions as a manganese efflux pump. This is Putative manganese efflux pump MntP from Bacillus cereus (strain Q1).